The chain runs to 323 residues: Fructose-1,6-bisphosphatase class 1 (323 aa).

4 residues coordinate Mg(2+): Glu84, Asp103, Leu105, and Asp106. Residues 106 to 109, Asn198, and Lys264 each bind substrate; that span reads DGSS. Glu270 serves as a coordination point for Mg(2+).

It belongs to the FBPase class 1 family. As to quaternary structure, homotetramer. It depends on Mg(2+) as a cofactor.

Its subcellular location is the cytoplasm. The enzyme catalyses beta-D-fructose 1,6-bisphosphate + H2O = beta-D-fructose 6-phosphate + phosphate. Its pathway is carbohydrate biosynthesis; gluconeogenesis. In Pseudoalteromonas atlantica (strain T6c / ATCC BAA-1087), this protein is Fructose-1,6-bisphosphatase class 1.